Here is a 247-residue protein sequence, read N- to C-terminus: Small ribosomal subunit protein uS2 (247 aa).

It belongs to the universal ribosomal protein uS2 family.

In Ectopseudomonas mendocina (strain ymp) (Pseudomonas mendocina), this protein is Small ribosomal subunit protein uS2.